Reading from the N-terminus, the 209-residue chain is Uracil phosphoribosyltransferase (209 aa).

5-phospho-alpha-D-ribose 1-diphosphate is bound by residues R79, R104, and 131-139 (DPMLATGGS). Uracil is bound by residues I194 and 199–201 (GDA). D200 is a 5-phospho-alpha-D-ribose 1-diphosphate binding site.

This sequence belongs to the UPRTase family. Mg(2+) is required as a cofactor.

The enzyme catalyses UMP + diphosphate = 5-phospho-alpha-D-ribose 1-diphosphate + uracil. It functions in the pathway pyrimidine metabolism; UMP biosynthesis via salvage pathway; UMP from uracil: step 1/1. With respect to regulation, allosterically activated by GTP. Its function is as follows. Catalyzes the conversion of uracil and 5-phospho-alpha-D-ribose 1-diphosphate (PRPP) to UMP and diphosphate. The chain is Uracil phosphoribosyltransferase from Enterococcus faecalis (strain ATCC 700802 / V583).